Reading from the N-terminus, the 1771-residue chain is Kinase D-interacting substrate of 220 kDa (1771 aa).

The Cytoplasmic segment spans residues Met-1 to Trp-499. ANK repeat units lie at residues Leu-4 to Glu-33, Cys-37 to Leu-66, Asp-70 to His-99, Gly-103 to Val-132, Tyr-136 to Cys-165, Tyr-169 to Gln-198, Asn-202 to Leu-231, Asp-235 to Ile-264, Ser-268 to Ile-297, Asp-301 to Ile-330, Asp-334 to Ala-363, and Lys-367 to Leu-396. The 514-residue stretch at Tyr-440 to Leu-953 folds into the KAP NTPase domain. A helical transmembrane segment spans residues Leu-500–Val-520. At His-521 to Leu-524 the chain is on the extracellular side. The chain crosses the membrane as a helical span at residues Gly-525–Phe-545. Residues Gly-546–Ser-659 lie on the Cytoplasmic side of the membrane. The helical transmembrane segment at Phe-660–Phe-680 threads the bilayer. The Extracellular segment spans residues Arg-681–Lys-685. Residues His-686–Leu-706 traverse the membrane as a helical segment. The Cytoplasmic portion of the chain corresponds to Asn-707–Leu-1771. Phosphoserine occurs at positions 882 and 885. Position 914 is a phosphothreonine (Thr-914). Ser-918 is subject to Phosphoserine. Residues Pro-1089–Pro-1092 are mediates interaction with CRKL. At Ser-1163 the chain carries Phosphoserine. Disordered regions lie at residues Asp-1182–Gly-1202, Pro-1285–His-1310, Arg-1344–Ser-1368, and Leu-1397–Arg-1564. Phosphoserine is present on residues Ser-1296, Ser-1352, Ser-1359, Ser-1361, Ser-1362, and Ser-1365. Polar residues predominate over residues Ser-1346–Pro-1358. Residues Ser-1359–Ser-1368 show a composition bias toward low complexity. Residues Ser-1403–Asn-1430 are compositionally biased toward polar residues. Basic and acidic residues predominate over residues Leu-1431–Val-1457. The segment covering Tyr-1460–Ala-1470 has biased composition (polar residues). Phosphoserine is present on residues Ser-1521, Ser-1526, Ser-1555, and Ser-1574. The span at Asp-1522 to Asp-1532 shows a compositional bias: acidic residues. Basic and acidic residues predominate over residues Leu-1537–Glu-1561. Residues Leu-1578 to Ser-1633 form a disordered region. Positions Asp-1585 to Ser-1594 are enriched in low complexity. 2 positions are modified to phosphoserine: Ser-1623 and Ser-1633. A Phosphothreonine modification is found at Thr-1679. Residue Ser-1681 is modified to Phosphoserine. Phosphothreonine is present on Thr-1684. Positions Leu-1713–Ser-1731 are enriched in polar residues. Residues Leu-1713–Leu-1771 form a disordered region. Positions Glu-1766–Leu-1771 match the PDZ-binding motif.

In terms of assembly, found in a complex, at least composed of KIDINS220, MAGI2, NTRK1 and RAPGEF2; the complex is mainly formed at late endosomes in a nerve growth factor (NGF)-dependent manner. Interacts with RAPGEF2; the interaction is strengthened after NGF stimulation. Isoform 2 interacts (via C-terminal domain) with MAGI2 isoform 1 (via PDZ domain). Interacts with NTRK1, NTRK2, NTRK3, ERKL and NGFR. Can form a ternary complex with NGFR and NTRK1 and this complex is affected by the expression levels of KIDINS220/ARMS. An increase in KIDINS220/ARMS expression leads to a decreased association of NGFR and NTRK1. Interacts (via PDZ-binding motif) with SNTA1 and SNTB2 (via PDZ domains). Interacts with EPHA4 and PRKD1. Post-translationally, tyrosine phosphorylated by NTRK1, NTRK2, EPHB2 and EPHA4. Phosphorylation at Ser-918 is induced by phorbol ester treatment. Phosphorylation by NTRK2 is induced by brain-derived neurotrophic factor (BDNF) and neurotrophin-4/5. Phosphorylation by NTRK1 is induced by nerve growth factor (NGF). Abundant in developing and adult neural tissues as well as neuroendocrine cells and dendritic cells. Overexpressed in melanoma and melanoma cell lines.

The protein resides in the membrane. Its subcellular location is the late endosome. Functionally, promotes a prolonged MAP-kinase signaling by neurotrophins through activation of a Rap1-dependent mechanism. Provides a docking site for the CRKL-C3G complex, resulting in Rap1-dependent sustained ERK activation. May play an important role in regulating postsynaptic signal transduction through the syntrophin-mediated localization of receptor tyrosine kinases such as EPHA4. In cooperation with SNTA1 can enhance EPHA4-induced JAK/STAT activation. Plays a role in nerve growth factor (NGF)-induced recruitment of RAPGEF2 to late endosomes and neurite outgrowth. May play a role in neurotrophin- and ephrin-mediated neuronal outgrowth and in axon guidance during neural development and in neuronal regeneration. Modulates stress-induced apoptosis of melanoma cells via regulation of the MEK/ERK signaling pathway. This is Kinase D-interacting substrate of 220 kDa (KIDINS220) from Homo sapiens (Human).